The chain runs to 342 residues: N-acetyl-gamma-glutamyl-phosphate reductase (342 aa).

Cys146 is a catalytic residue.

The protein belongs to the NAGSA dehydrogenase family. Type 1 subfamily.

The protein localises to the cytoplasm. The catalysed reaction is N-acetyl-L-glutamate 5-semialdehyde + phosphate + NADP(+) = N-acetyl-L-glutamyl 5-phosphate + NADPH + H(+). It functions in the pathway amino-acid biosynthesis; L-arginine biosynthesis; N(2)-acetyl-L-ornithine from L-glutamate: step 3/4. Its function is as follows. Catalyzes the NADPH-dependent reduction of N-acetyl-5-glutamyl phosphate to yield N-acetyl-L-glutamate 5-semialdehyde. The chain is N-acetyl-gamma-glutamyl-phosphate reductase from Frankia casuarinae (strain DSM 45818 / CECT 9043 / HFP020203 / CcI3).